A 289-amino-acid chain; its full sequence is Pantothenate synthetase (289 aa).

30–37 is an ATP binding site; sequence MGYLHEGH. Residue histidine 37 is the Proton donor of the active site. Glutamine 61 is a (R)-pantoate binding site. Glutamine 61 is a beta-alanine binding site. 147–150 contacts ATP; it reads GLKD. Position 153 (glutamine 153) interacts with (R)-pantoate. Residues valine 176 and 184–187 contribute to the ATP site; that span reads KSSR.

The protein belongs to the pantothenate synthetase family. As to quaternary structure, homodimer.

It localises to the cytoplasm. The catalysed reaction is (R)-pantoate + beta-alanine + ATP = (R)-pantothenate + AMP + diphosphate + H(+). It functions in the pathway cofactor biosynthesis; (R)-pantothenate biosynthesis; (R)-pantothenate from (R)-pantoate and beta-alanine: step 1/1. Catalyzes the condensation of pantoate with beta-alanine in an ATP-dependent reaction via a pantoyl-adenylate intermediate. The polypeptide is Pantothenate synthetase (Geobacillus thermodenitrificans (strain NG80-2)).